The chain runs to 325 residues: UDP-N-acetylenolpyruvoylglucosamine reductase (325 aa).

The region spanning 40–221 (RTGGLAELFY…RAAMDEVALH (182 aa)) is the FAD-binding PCMH-type domain. Arginine 186 is a catalytic residue. Serine 235 serves as the catalytic Proton donor. Residue glutamate 305 is part of the active site.

This sequence belongs to the MurB family. The cofactor is FAD.

The protein localises to the cytoplasm. It catalyses the reaction UDP-N-acetyl-alpha-D-muramate + NADP(+) = UDP-N-acetyl-3-O-(1-carboxyvinyl)-alpha-D-glucosamine + NADPH + H(+). The protein operates within cell wall biogenesis; peptidoglycan biosynthesis. In terms of biological role, cell wall formation. The protein is UDP-N-acetylenolpyruvoylglucosamine reductase of Bartonella henselae (strain ATCC 49882 / DSM 28221 / CCUG 30454 / Houston 1) (Rochalimaea henselae).